The chain runs to 401 residues: NALCN channel auxiliary factor 2 (401 aa).

A helical transmembrane segment spans residues 42-62 (LASLLFFTALLSDHLWLCAGG). N-linked (GlcNAc...) asparagine glycosylation is found at Asn-77, Asn-97, Asn-153, and Asn-178. A helical membrane pass occupies residues 362–382 (LCVLVLFLLHTFISITTLQHC).

It belongs to the NALF family.

The protein resides in the membrane. Its function is as follows. Probable component of the NALCN channel complex, a channel that regulates the resting membrane potential and controls neuronal excitability. This Danio rerio (Zebrafish) protein is NALCN channel auxiliary factor 2 (nalf2).